Reading from the N-terminus, the 734-residue chain is Photosystem I P700 chlorophyll a apoprotein A2 (734 aa).

Transmembrane regions (helical) follow at residues 46-69 (IFAS…FHVA), 135-158 (LYTG…LHLQ), 175-199 (LNHH…HVAI), 273-291 (IAHH…GHMY), 330-353 (IHFQ…QHMY), 369-395 (AALY…IFFI), 417-439 (AIKS…LYVH), and 517-535 (FLVH…LILV). Residues Cys-559 and Cys-568 each contribute to the [4Fe-4S] cluster site. The next 2 helical transmembrane spans lie at 575–596 (AFYL…YWHW) and 643–665 (LSVW…MFLI). Chlorophyll a contacts are provided by His-654, Met-662, and Tyr-670. Trp-671 lines the phylloquinone pocket. A helical membrane pass occupies residues 707 to 727 (LVGLAHFSVGYIFTYAAFLIA).

Belongs to the PsaA/PsaB family. As to quaternary structure, the PsaA/B heterodimer binds the P700 chlorophyll special pair and subsequent electron acceptors. PSI consists of a core antenna complex that captures photons, and an electron transfer chain that converts photonic excitation into a charge separation. The eukaryotic PSI reaction center is composed of at least 11 subunits. P700 is a chlorophyll a/chlorophyll a' dimer, A0 is one or more chlorophyll a, A1 is one or both phylloquinones and FX is a shared 4Fe-4S iron-sulfur center. serves as cofactor.

It is found in the plastid. The protein localises to the chloroplast thylakoid membrane. The catalysed reaction is reduced [plastocyanin] + hnu + oxidized [2Fe-2S]-[ferredoxin] = oxidized [plastocyanin] + reduced [2Fe-2S]-[ferredoxin]. Its function is as follows. PsaA and PsaB bind P700, the primary electron donor of photosystem I (PSI), as well as the electron acceptors A0, A1 and FX. PSI is a plastocyanin-ferredoxin oxidoreductase, converting photonic excitation into a charge separation, which transfers an electron from the donor P700 chlorophyll pair to the spectroscopically characterized acceptors A0, A1, FX, FA and FB in turn. Oxidized P700 is reduced on the lumenal side of the thylakoid membrane by plastocyanin. The protein is Photosystem I P700 chlorophyll a apoprotein A2 of Amborella trichopoda.